The following is a 247-amino-acid chain: UPF0309 protein GWCH70_1414 (247 aa).

Residues 31 to 214 (VSEAIQKGGI…VLMAENGFEP (184 aa)) enclose the SIS domain.

Belongs to the UPF0309 family.

The chain is UPF0309 protein GWCH70_1414 from Geobacillus sp. (strain WCH70).